A 255-amino-acid chain; its full sequence is 3-deoxy-manno-octulosonate cytidylyltransferase (255 aa).

This sequence belongs to the KdsB family.

The protein localises to the cytoplasm. It carries out the reaction 3-deoxy-alpha-D-manno-oct-2-ulosonate + CTP = CMP-3-deoxy-beta-D-manno-octulosonate + diphosphate. It functions in the pathway nucleotide-sugar biosynthesis; CMP-3-deoxy-D-manno-octulosonate biosynthesis; CMP-3-deoxy-D-manno-octulosonate from 3-deoxy-D-manno-octulosonate and CTP: step 1/1. Its pathway is bacterial outer membrane biogenesis; lipopolysaccharide biosynthesis. In terms of biological role, activates KDO (a required 8-carbon sugar) for incorporation into bacterial lipopolysaccharide in Gram-negative bacteria. The sequence is that of 3-deoxy-manno-octulosonate cytidylyltransferase from Psychromonas ingrahamii (strain DSM 17664 / CCUG 51855 / 37).